Here is a 495-residue protein sequence, read N- to C-terminus: N-succinylglutamate 5-semialdehyde dehydrogenase (495 aa).

220–225 provides a ligand contact to NAD(+); it reads GSAGTG. Catalysis depends on residues Glu-243 and Cys-277.

This sequence belongs to the aldehyde dehydrogenase family. AstD subfamily.

The catalysed reaction is N-succinyl-L-glutamate 5-semialdehyde + NAD(+) + H2O = N-succinyl-L-glutamate + NADH + 2 H(+). It functions in the pathway amino-acid degradation; L-arginine degradation via AST pathway; L-glutamate and succinate from L-arginine: step 4/5. Functionally, catalyzes the NAD-dependent reduction of succinylglutamate semialdehyde into succinylglutamate. This is N-succinylglutamate 5-semialdehyde dehydrogenase from Enterobacter sp. (strain 638).